Here is a 946-residue protein sequence, read N- to C-terminus: Bifunctional glutamine synthetase adenylyltransferase/adenylyl-removing enzyme (946 aa).

An adenylyl removase region spans residues 1–440 (MKPLSSPLQQ…VFNELIGDDE (440 aa)). The segment at 449–946 (SEQWRELWQD…ASWQKWLVEE (498 aa)) is adenylyl transferase.

It belongs to the GlnE family. It depends on Mg(2+) as a cofactor.

It catalyses the reaction [glutamine synthetase]-O(4)-(5'-adenylyl)-L-tyrosine + phosphate = [glutamine synthetase]-L-tyrosine + ADP. It carries out the reaction [glutamine synthetase]-L-tyrosine + ATP = [glutamine synthetase]-O(4)-(5'-adenylyl)-L-tyrosine + diphosphate. Involved in the regulation of glutamine synthetase GlnA, a key enzyme in the process to assimilate ammonia. When cellular nitrogen levels are high, the C-terminal adenylyl transferase (AT) inactivates GlnA by covalent transfer of an adenylyl group from ATP to specific tyrosine residue of GlnA, thus reducing its activity. Conversely, when nitrogen levels are low, the N-terminal adenylyl removase (AR) activates GlnA by removing the adenylyl group by phosphorolysis, increasing its activity. The regulatory region of GlnE binds the signal transduction protein PII (GlnB) which indicates the nitrogen status of the cell. This Shigella dysenteriae serotype 1 (strain Sd197) protein is Bifunctional glutamine synthetase adenylyltransferase/adenylyl-removing enzyme.